Here is a 303-residue protein sequence, read N- to C-terminus: Guanosine-inosine kinase (303 aa).

Belongs to the carbohydrate kinase PfkB family. In terms of assembly, homodimer. Mg(2+) is required as a cofactor.

The enzyme catalyses guanosine + ATP = GMP + ADP + H(+). It catalyses the reaction inosine + ATP = IMP + ADP + H(+). The protein operates within purine metabolism; IMP biosynthesis via salvage pathway; IMP from inosine: step 1/1. It functions in the pathway purine metabolism; GMP biosynthesis via salvage pathway. Its activity is regulated as follows. Kinase activity is stimulated by pyrimidine nucleotides, especially CMP and CTP, and inhibited by AMP, ADP and GMP. Activity is stimulated by potassium or ammonium ions. Its function is as follows. Catalyzes the phosphorylation of guanosine and inosine to GMP and IMP, respectively. Can also use deoxyguanosine. Shows a strong preference for guanosine. dATP, GTP and dGTP can serve as phosphate donors. This Exiguobacterium acetylicum (Brevibacterium acetylicum) protein is Guanosine-inosine kinase.